Consider the following 313-residue polypeptide: 4-hydroxy-3-methylbut-2-enyl diphosphate reductase (313 aa).

[4Fe-4S] cluster is bound at residue C12. (2E)-4-hydroxy-3-methylbut-2-enyl diphosphate contacts are provided by H41 and H74. Dimethylallyl diphosphate is bound by residues H41 and H74. Residues H41 and H74 each contribute to the isopentenyl diphosphate site. Residue C96 participates in [4Fe-4S] cluster binding. H124 contributes to the (2E)-4-hydroxy-3-methylbut-2-enyl diphosphate binding site. H124 serves as a coordination point for dimethylallyl diphosphate. H124 is an isopentenyl diphosphate binding site. Residue E126 is the Proton donor of the active site. T167 is a binding site for (2E)-4-hydroxy-3-methylbut-2-enyl diphosphate. C197 is a [4Fe-4S] cluster binding site. 4 residues coordinate (2E)-4-hydroxy-3-methylbut-2-enyl diphosphate: S225, S226, N227, and S269. 4 residues coordinate dimethylallyl diphosphate: S225, S226, N227, and S269. 4 residues coordinate isopentenyl diphosphate: S225, S226, N227, and S269.

This sequence belongs to the IspH family. It depends on [4Fe-4S] cluster as a cofactor.

The catalysed reaction is isopentenyl diphosphate + 2 oxidized [2Fe-2S]-[ferredoxin] + H2O = (2E)-4-hydroxy-3-methylbut-2-enyl diphosphate + 2 reduced [2Fe-2S]-[ferredoxin] + 2 H(+). It catalyses the reaction dimethylallyl diphosphate + 2 oxidized [2Fe-2S]-[ferredoxin] + H2O = (2E)-4-hydroxy-3-methylbut-2-enyl diphosphate + 2 reduced [2Fe-2S]-[ferredoxin] + 2 H(+). The protein operates within isoprenoid biosynthesis; dimethylallyl diphosphate biosynthesis; dimethylallyl diphosphate from (2E)-4-hydroxy-3-methylbutenyl diphosphate: step 1/1. Its pathway is isoprenoid biosynthesis; isopentenyl diphosphate biosynthesis via DXP pathway; isopentenyl diphosphate from 1-deoxy-D-xylulose 5-phosphate: step 6/6. Its function is as follows. Catalyzes the conversion of 1-hydroxy-2-methyl-2-(E)-butenyl 4-diphosphate (HMBPP) into a mixture of isopentenyl diphosphate (IPP) and dimethylallyl diphosphate (DMAPP). Acts in the terminal step of the DOXP/MEP pathway for isoprenoid precursor biosynthesis. The protein is 4-hydroxy-3-methylbut-2-enyl diphosphate reductase of Photobacterium profundum (strain SS9).